Reading from the N-terminus, the 285-residue chain is Neuralized-like protein 2 (285 aa).

The segment at 1–20 (MAAASEPVDSGALWGLERPE) is disordered. An NHR domain is found at 23-244 (PTRFHRVHGA…STKSVRLVQL (222 aa)). One can recognise an SOCS box domain in the interval 250-285 (SLQTLCRLVIQRSMVHRLAIDGLHLPKELKDFCKYE).

Probable component the ECS(NEURL2) E3 ubiquitin-protein ligase complex consisting of ELOB/Elongin B, ELOC/Elongin C, CUL5, RBX1 and NEURL2. Interacts with CTNNB1. Expressed specifically in skeletal and cardiac muscles.

The protein localises to the cytoplasm. It functions in the pathway protein modification; protein ubiquitination. In terms of biological role, plays an important role in the process of myofiber differentiation and maturation. Probable substrate-recognition component of a SCF-like ECS (Elongin BC-CUL2/5-SOCS-box protein) E3 ubiquitin-protein ligase complex, which mediates the ubiquitination of proteins. Probably contributes to catalysis through recognition and positioning of the substrate and the ubiquitin-conjugating enzyme. During myogenesis, controls the ubiquitination and degradation of the specific pool of CTNNB1/beta-catenin located at the sarcolemma. The polypeptide is Neuralized-like protein 2 (NEURL2) (Homo sapiens (Human)).